The sequence spans 382 residues: Galactokinase (382 aa).

Residue 34–37 (EHTD) coordinates substrate. 124–130 (GAGLSSS) provides a ligand contact to ATP. The Mg(2+) site is built by serine 130 and glutamate 162. Catalysis depends on aspartate 174, which acts as the Proton acceptor. Substrate is bound at residue tyrosine 223.

The protein belongs to the GHMP kinase family. GalK subfamily.

It localises to the cytoplasm. It carries out the reaction alpha-D-galactose + ATP = alpha-D-galactose 1-phosphate + ADP + H(+). It participates in carbohydrate metabolism; galactose metabolism. Functionally, catalyzes the transfer of the gamma-phosphate of ATP to D-galactose to form alpha-D-galactose-1-phosphate (Gal-1-P). The chain is Galactokinase from Enterobacter sp. (strain 638).